The primary structure comprises 164 residues: V-type proton ATPase 16 kDa proteolipid subunit (164 aa).

Residues methionine 1–threonine 9 lie on the Lumenal side of the membrane. A helical membrane pass occupies residues alanine 10–glycine 32. The Cytoplasmic portion of the chain corresponds to threonine 33 to serine 54. A helical membrane pass occupies residues isoleucine 55 to isoleucine 75. At serine 76–histidine 94 the chain is on the lumenal side. The chain crosses the membrane as a helical span at residues leucine 95–glycine 116. The Cytoplasmic segment spans residues aspartate 117–lysine 128. A helical transmembrane segment spans residues leucine 129 to leucine 154. The Lumenal segment spans residues serine 155–aspartate 164.

This sequence belongs to the V-ATPase proteolipid subunit family. V-ATPase is a heteromultimeric enzyme composed of a peripheral catalytic V1 complex (main components: subunits A, B, C, D, E, and F) attached to an integral membrane V0 proton pore complex (main component: the proteolipid protein; which is present as a hexamer that forms the proton-conducting pore).

It is found in the vacuole membrane. Functionally, proton-conducting pore forming subunit of the membrane integral V0 complex of vacuolar ATPase. V-ATPase is responsible for acidifying a variety of intracellular compartments in eukaryotic cells. The protein is V-type proton ATPase 16 kDa proteolipid subunit of Vigna radiata var. radiata (Mung bean).